A 311-amino-acid chain; its full sequence is N-acetyl-gamma-glutamyl-phosphate reductase (311 aa).

C117 is an active-site residue.

It belongs to the NAGSA dehydrogenase family. Type 2 subfamily.

The protein localises to the cytoplasm. It catalyses the reaction N-acetyl-L-glutamate 5-semialdehyde + phosphate + NADP(+) = N-acetyl-L-glutamyl 5-phosphate + NADPH + H(+). The protein operates within amino-acid biosynthesis; L-arginine biosynthesis; N(2)-acetyl-L-ornithine from L-glutamate: step 3/4. Catalyzes the NADPH-dependent reduction of N-acetyl-5-glutamyl phosphate to yield N-acetyl-L-glutamate 5-semialdehyde. The sequence is that of N-acetyl-gamma-glutamyl-phosphate reductase from Brucella anthropi (strain ATCC 49188 / DSM 6882 / CCUG 24695 / JCM 21032 / LMG 3331 / NBRC 15819 / NCTC 12168 / Alc 37) (Ochrobactrum anthropi).